The sequence spans 378 residues: Carbamoyl phosphate synthase small chain (378 aa).

The interval 1–189 (MTKPAILALA…DSHPEIPAGE (189 aa)) is CPSase. L-glutamine contacts are provided by Ser47, Gly241, and Gly243. The Glutamine amidotransferase type-1 domain occupies 193–378 (HVVAYDYGVK…RFISAMAERR (186 aa)). Cys269 functions as the Nucleophile in the catalytic mechanism. Leu270, Gln273, Asn311, Gly313, and Phe314 together coordinate L-glutamine. Residues His353 and Glu355 contribute to the active site.

Belongs to the CarA family. In terms of assembly, composed of two chains; the small (or glutamine) chain promotes the hydrolysis of glutamine to ammonia, which is used by the large (or ammonia) chain to synthesize carbamoyl phosphate. Tetramer of heterodimers (alpha,beta)4.

It carries out the reaction hydrogencarbonate + L-glutamine + 2 ATP + H2O = carbamoyl phosphate + L-glutamate + 2 ADP + phosphate + 2 H(+). The catalysed reaction is L-glutamine + H2O = L-glutamate + NH4(+). It functions in the pathway amino-acid biosynthesis; L-arginine biosynthesis; carbamoyl phosphate from bicarbonate: step 1/1. The protein operates within pyrimidine metabolism; UMP biosynthesis via de novo pathway; (S)-dihydroorotate from bicarbonate: step 1/3. Small subunit of the glutamine-dependent carbamoyl phosphate synthetase (CPSase). CPSase catalyzes the formation of carbamoyl phosphate from the ammonia moiety of glutamine, carbonate, and phosphate donated by ATP, constituting the first step of 2 biosynthetic pathways, one leading to arginine and/or urea and the other to pyrimidine nucleotides. The small subunit (glutamine amidotransferase) binds and cleaves glutamine to supply the large subunit with the substrate ammonia. This is Carbamoyl phosphate synthase small chain from Pseudomonas aeruginosa (strain ATCC 15692 / DSM 22644 / CIP 104116 / JCM 14847 / LMG 12228 / 1C / PRS 101 / PAO1).